A 185-amino-acid chain; its full sequence is MQTIRKSLGLVLIMFVLCGFIFPLTVTALGQVLFPEQANGSLVKQDGKVIGSKLIGQQWTEPKYFHGRISAVNYNMNANEVKESGGPASGGSNYGNSNPELKKRVQETIKQEGKKISSDAVTASGSGLDPDITVDNAKQQVKRIAKERNIDASKINHLIDENKQASPMADDYVNVLKLNITLDKL.

The helical transmembrane segment at L8 to A28 threads the bilayer.

This sequence belongs to the KdpC family. As to quaternary structure, the system is composed of three essential subunits: KdpA, KdpB and KdpC.

It localises to the cell membrane. The protein localises to the membrane raft. Part of the high-affinity ATP-driven potassium transport (or Kdp) system, which catalyzes the hydrolysis of ATP coupled with the electrogenic transport of potassium into the cytoplasm. This subunit acts as a catalytic chaperone that increases the ATP-binding affinity of the ATP-hydrolyzing subunit KdpB by the formation of a transient KdpB/KdpC/ATP ternary complex. In Staphylococcus aureus (strain Mu50 / ATCC 700699), this protein is Potassium-transporting ATPase KdpC subunit 2.